The chain runs to 275 residues: Putative pyruvate, phosphate dikinase regulatory protein (275 aa).

149–156 (GVSRTSKT) contributes to the ADP binding site.

The protein belongs to the pyruvate, phosphate/water dikinase regulatory protein family. PDRP subfamily.

It carries out the reaction N(tele)-phospho-L-histidyl/L-threonyl-[pyruvate, phosphate dikinase] + ADP = N(tele)-phospho-L-histidyl/O-phospho-L-threonyl-[pyruvate, phosphate dikinase] + AMP + H(+). The catalysed reaction is N(tele)-phospho-L-histidyl/O-phospho-L-threonyl-[pyruvate, phosphate dikinase] + phosphate + H(+) = N(tele)-phospho-L-histidyl/L-threonyl-[pyruvate, phosphate dikinase] + diphosphate. Bifunctional serine/threonine kinase and phosphorylase involved in the regulation of the pyruvate, phosphate dikinase (PPDK) by catalyzing its phosphorylation/dephosphorylation. The protein is Putative pyruvate, phosphate dikinase regulatory protein of Levilactobacillus brevis (strain ATCC 367 / BCRC 12310 / CIP 105137 / JCM 1170 / LMG 11437 / NCIMB 947 / NCTC 947) (Lactobacillus brevis).